We begin with the raw amino-acid sequence, 160 residues long: Crossover junction endodeoxyribonuclease RuvC (160 aa).

Active-site residues include aspartate 7, glutamate 70, and aspartate 142. Mg(2+)-binding residues include aspartate 7, glutamate 70, and aspartate 142.

It belongs to the RuvC family. As to quaternary structure, homodimer which binds Holliday junction (HJ) DNA. The HJ becomes 2-fold symmetrical on binding to RuvC with unstacked arms; it has a different conformation from HJ DNA in complex with RuvA. In the full resolvosome a probable DNA-RuvA(4)-RuvB(12)-RuvC(2) complex forms which resolves the HJ. Mg(2+) serves as cofactor.

It is found in the cytoplasm. It carries out the reaction Endonucleolytic cleavage at a junction such as a reciprocal single-stranded crossover between two homologous DNA duplexes (Holliday junction).. The RuvA-RuvB-RuvC complex processes Holliday junction (HJ) DNA during genetic recombination and DNA repair. Endonuclease that resolves HJ intermediates. Cleaves cruciform DNA by making single-stranded nicks across the HJ at symmetrical positions within the homologous arms, yielding a 5'-phosphate and a 3'-hydroxyl group; requires a central core of homology in the junction. The consensus cleavage sequence is 5'-(A/T)TT(C/G)-3'. Cleavage occurs on the 3'-side of the TT dinucleotide at the point of strand exchange. HJ branch migration catalyzed by RuvA-RuvB allows RuvC to scan DNA until it finds its consensus sequence, where it cleaves and resolves the cruciform DNA. The protein is Crossover junction endodeoxyribonuclease RuvC of Ehrlichia ruminantium (strain Gardel).